A 223-amino-acid chain; its full sequence is Holliday junction branch migration complex subunit RuvA (223 aa).

The domain I stretch occupies residues 1–67 (MIGWLKGEKI…EDGSNLFGFI (67 aa)). The interval 68 to 146 (EKSERDLFRK…DFDLNNEFSP (79 aa)) is domain II. The flexible linker stretch occupies residues 147 to 157 (PTKLRPESAED). Positions 158–223 (LNEELLTEIK…FKQALITLNK (66 aa)) are domain III.

Belongs to the RuvA family. Homotetramer. Forms an RuvA(8)-RuvB(12)-Holliday junction (HJ) complex. HJ DNA is sandwiched between 2 RuvA tetramers; dsDNA enters through RuvA and exits via RuvB. An RuvB hexamer assembles on each DNA strand where it exits the tetramer. Each RuvB hexamer is contacted by two RuvA subunits (via domain III) on 2 adjacent RuvB subunits; this complex drives branch migration. In the full resolvosome a probable DNA-RuvA(4)-RuvB(12)-RuvC(2) complex forms which resolves the HJ.

It is found in the cytoplasm. Functionally, the RuvA-RuvB-RuvC complex processes Holliday junction (HJ) DNA during genetic recombination and DNA repair, while the RuvA-RuvB complex plays an important role in the rescue of blocked DNA replication forks via replication fork reversal (RFR). RuvA specifically binds to HJ cruciform DNA, conferring on it an open structure. The RuvB hexamer acts as an ATP-dependent pump, pulling dsDNA into and through the RuvAB complex. HJ branch migration allows RuvC to scan DNA until it finds its consensus sequence, where it cleaves and resolves the cruciform DNA. The polypeptide is Holliday junction branch migration complex subunit RuvA (Prochlorococcus marinus (strain MIT 9211)).